The chain runs to 211 residues: Large ribosomal subunit protein uL4 (211 aa).

Residues 40-85 are disordered; sequence QQAHSRQGTASTLTRSEVRGGGRKPYKQKGTGRARQGSIRTPLRPG. The span at 41-54 shows a compositional bias: polar residues; sequence QAHSRQGTASTLTR. A compositionally biased stretch (basic residues) spans 60 to 71; it reads GGRKPYKQKGTG.

The protein belongs to the universal ribosomal protein uL4 family. In terms of assembly, part of the 50S ribosomal subunit.

Its function is as follows. One of the primary rRNA binding proteins, this protein initially binds near the 5'-end of the 23S rRNA. It is important during the early stages of 50S assembly. It makes multiple contacts with different domains of the 23S rRNA in the assembled 50S subunit and ribosome. In terms of biological role, forms part of the polypeptide exit tunnel. In Prochlorococcus marinus (strain NATL2A), this protein is Large ribosomal subunit protein uL4.